We begin with the raw amino-acid sequence, 188 residues long: HTH-type transcriptional repressor AcnR (188 aa).

Residues 10-70 (TNSRQEILEG…ALAREDAARM (61 aa)) enclose the HTH tetR-type domain. Positions 33 to 52 (TVRRLEEATGKSRGAIFHHF) form a DNA-binding region, H-T-H motif. Residues 79 to 80 (LV), Arg130, and Asn134 each bind citrate. Glu181 is a binding site for Mg(2+). A citrate-binding site is contributed by Arg185.

In terms of assembly, homodimer.

Functionally, acnR negatively controls the expression of the aconitase gene acn. Binds to the imperfect inverted repeat in the acn promoter region. This chain is HTH-type transcriptional repressor AcnR, found in Corynebacterium glutamicum (strain ATCC 13032 / DSM 20300 / JCM 1318 / BCRC 11384 / CCUG 27702 / LMG 3730 / NBRC 12168 / NCIMB 10025 / NRRL B-2784 / 534).